A 62-amino-acid chain; its full sequence is Photosystem II reaction center protein Z (62 aa).

2 helical membrane-spanning segments follow: residues 8-28 (LVFI…VTFA) and 41-61 (YTGA…NSFI).

Belongs to the PsbZ family. PSII is composed of 1 copy each of membrane proteins PsbA, PsbB, PsbC, PsbD, PsbE, PsbF, PsbH, PsbI, PsbJ, PsbK, PsbL, PsbM, PsbT, sbX, PsbY, PsbZ, Psb30/Ycf12, at least 3 peripheral proteins of the oxygen-evolving complex and a large number of cofactors. It forms dimeric complexes.

Its subcellular location is the plastid. The protein resides in the chloroplast thylakoid membrane. Functionally, may control the interaction of photosystem II (PSII) cores with the light-harvesting antenna, regulates electron flow through the 2 photosystem reaction centers. PSII is a light-driven water plastoquinone oxidoreductase, using light energy to abstract electrons from H(2)O, generating a proton gradient subsequently used for ATP formation. The protein is Photosystem II reaction center protein Z of Gracilaria tenuistipitata var. liui (Red alga).